Consider the following 430-residue polypeptide: Dye-decolorizing peroxidase Tfu_3078 (430 aa).

The tat-type signal signal peptide spans 1–39; it reads MTEPDTERKGSSRRGFLAGLGAAALTGAGIGMAAGEVLR. The segment at 42–75 is disordered; that stretch reads LPDSDPAASPEAEQRLRMAAQRADATAAPQPGIS. Positions 60-69 are enriched in low complexity; the sequence is AAQRADATAA. D242 serves as the catalytic Proton acceptor. H338 provides a ligand contact to heme.

This sequence belongs to the DyP-type peroxidase family. As to quaternary structure, monomer. It depends on heme b as a cofactor. In terms of processing, exported by the Tat system. The position of the signal peptide cleavage has not been experimentally proven.

Its subcellular location is the secreted. The enzyme catalyses Reactive Blue 5 + 2 H2O2 = 2,2'-disulfonyl azobenzene + 3-[(4-amino-6-chloro-1,3,5-triazin-2-yl)amino]benzenesulfonate + phthalate + 2 H2O + 2 H(+). Functionally, peroxidase that is able to convert a large number of compounds, but its physiological substrate is not known. Shows high reactivity towards anthraquinone dyes (e.g. Reactive Blue 19) and a modest activity towards standard peroxidase substrates (such as guaiacol and 2,6-dimethoxyphenol) and azo dyes (e.g. Reactive Blue 5). Is also able to oxidize aromatic sulfides enantioselectively, resulting in the corresponding (R)-sulfoxides, but with a poor efficiency. Does not display catalase activity. The chain is Dye-decolorizing peroxidase Tfu_3078 from Thermobifida fusca (strain YX).